We begin with the raw amino-acid sequence, 97 residues long: Large ribosomal subunit protein bL21 (97 aa).

This sequence belongs to the bacterial ribosomal protein bL21 family. As to quaternary structure, part of the 50S ribosomal subunit. Contacts protein L20.

This protein binds to 23S rRNA in the presence of protein L20. In Persephonella marina (strain DSM 14350 / EX-H1), this protein is Large ribosomal subunit protein bL21.